A 503-amino-acid chain; its full sequence is Chromodomain Y-like protein 2 (503 aa).

The Chromo domain occupies 7 to 67 (YEVERIVDKR…LHLSKDKRVK (61 aa)). The tract at residues 66–177 (VKSGKQAGAS…GNGSHQPDLE (112 aa)) is disordered. Over residues 88–98 (RLSHRPLEPGK) the composition is skewed to basic and acidic residues. The segment covering 101–120 (PSSHKRKRVNSPLSRPKKGS) has biased composition (basic residues). Polar residues predominate over residues 130–140 (KTVSYRTTPSG).

As to quaternary structure, interacts (via chromo domain) with histone H3K9me3.

Its subcellular location is the nucleus. In Mus musculus (Mouse), this protein is Chromodomain Y-like protein 2 (Cdyl2).